Here is a 298-residue protein sequence, read N- to C-terminus: Chitin deacetylase (298 aa).

The first 16 residues, 1–16 (MLAPLFAALLAGAATA), serve as a signal peptide directing secretion. In terms of domain architecture, NodB homology spans 39-222 (NTFALTFDDG…AIKAKGLTPV (184 aa)). Asp-46 acts as the Proton acceptor in catalysis. Asp-46 is an acetate binding site. Co(2+) is bound by residues Asp-47, His-99, and His-103. Tyr-140 is an acetate binding site. His-196 acts as the Proton donor in catalysis. One can recognise a Chitin-binding type-1 domain in the interval 256–298 (DDTCGGSNGYVCQNSQCCSQWGWCGTTSEYCAAGCQAAYGPCT). 4 cysteine pairs are disulfide-bonded: Cys-259-Cys-273, Cys-267-Cys-279, Cys-272-Cys-286, and Cys-290-Cys-297.

This sequence belongs to the polysaccharide deacetylase family. Co(2+) is required as a cofactor.

Its subcellular location is the secreted. It catalyses the reaction [(1-&gt;4)-N-acetyl-beta-D-glucosaminyl](n) + n H2O = chitosan + n acetate. With respect to regulation, inhibited by Fe(2+) and to a lesser extent by Mn(2+). Hydrolyzes the N-acetamido groups of N-acetyl-D-glucosamine polymers in chitin to form chitosan and acetate. May play a role in evasion of the host immune response; plant chitinases liberate chitin molecules from the fungal cell wall which act as elicitors of the plant immune response, deacetylation of the liberated chitin neutralizes elicitor activity. The sequence is that of Chitin deacetylase from Pestalotiopsis sp.